A 231-amino-acid chain; its full sequence is dTTP/UTP pyrophosphatase (231 aa).

The Proton acceptor role is filled by D81.

This sequence belongs to the Maf family. YhdE subfamily. Requires a divalent metal cation as cofactor.

Its subcellular location is the cytoplasm. It catalyses the reaction dTTP + H2O = dTMP + diphosphate + H(+). The enzyme catalyses UTP + H2O = UMP + diphosphate + H(+). In terms of biological role, nucleoside triphosphate pyrophosphatase that hydrolyzes dTTP and UTP. May have a dual role in cell division arrest and in preventing the incorporation of modified nucleotides into cellular nucleic acids. In Lawsonia intracellularis (strain PHE/MN1-00), this protein is dTTP/UTP pyrophosphatase.